A 319-amino-acid chain; its full sequence is Ornithine carbamoyltransferase (319 aa).

Residues 63–66 (STRT), Q90, R114, and 141–144 (HPCQ) contribute to the carbamoyl phosphate site. L-ornithine-binding positions include N172, D236, and 240 to 241 (SM). Carbamoyl phosphate-binding positions include 276–277 (CL) and R304.

Belongs to the aspartate/ornithine carbamoyltransferase superfamily. OTCase family.

It is found in the cytoplasm. The enzyme catalyses carbamoyl phosphate + L-ornithine = L-citrulline + phosphate + H(+). It functions in the pathway amino-acid biosynthesis; L-arginine biosynthesis; L-arginine from L-ornithine and carbamoyl phosphate: step 1/3. Reversibly catalyzes the transfer of the carbamoyl group from carbamoyl phosphate (CP) to the N(epsilon) atom of ornithine (ORN) to produce L-citrulline. This chain is Ornithine carbamoyltransferase, found in Halalkalibacterium halodurans (strain ATCC BAA-125 / DSM 18197 / FERM 7344 / JCM 9153 / C-125) (Bacillus halodurans).